The primary structure comprises 162 residues: Nucleotide-binding protein Mpe_A3039 (162 aa).

It belongs to the YajQ family.

Nucleotide-binding protein. The sequence is that of Nucleotide-binding protein Mpe_A3039 from Methylibium petroleiphilum (strain ATCC BAA-1232 / LMG 22953 / PM1).